A 163-amino-acid polypeptide reads, in one-letter code: Nucleotide-binding protein Cla_1551 (163 aa).

This sequence belongs to the YajQ family.

In terms of biological role, nucleotide-binding protein. This chain is Nucleotide-binding protein Cla_1551, found in Campylobacter lari (strain RM2100 / D67 / ATCC BAA-1060).